A 466-amino-acid polypeptide reads, in one-letter code: Asparagine--tRNA ligase (466 aa).

Belongs to the class-II aminoacyl-tRNA synthetase family. In terms of assembly, homodimer.

The protein resides in the cytoplasm. It carries out the reaction tRNA(Asn) + L-asparagine + ATP = L-asparaginyl-tRNA(Asn) + AMP + diphosphate + H(+). The sequence is that of Asparagine--tRNA ligase from Shewanella baltica (strain OS185).